The sequence spans 266 residues: NADP-dependent mannitol dehydrogenase (266 aa).

2 residues coordinate NADP(+): Asn-107 and Lys-140. Catalysis depends on Ser-159, which acts as the Proton donor. Positions 174, 178, 206, and 208 each coordinate NADP(+). Tyr-174 acts as the Proton acceptor in catalysis. The Lowers pKa of active site Tyr role is filled by Lys-178.

It belongs to the short-chain dehydrogenases/reductases (SDR) family. As to quaternary structure, homotetramer.

It carries out the reaction D-mannitol + NADP(+) = D-fructose + NADPH + H(+). Its function is as follows. Catalyzes the interconversion between D-mannitol and D-fructose. Plays a key role in liamocins biosynthesis by providing the mannitol moity that is linked to 3,5-dihydroxydecanoic acid (provided by the HR-PKS PKS1) via ester bond formation catalyzed by the esterase EST1. This Aureobasidium melanogenum (Aureobasidium pullulans var. melanogenum) protein is NADP-dependent mannitol dehydrogenase.